We begin with the raw amino-acid sequence, 68 residues long: DNA gyrase inhibitor YacG (68 aa).

Cysteine 14, cysteine 17, cysteine 29, and cysteine 33 together coordinate Zn(2+).

The protein belongs to the DNA gyrase inhibitor YacG family. In terms of assembly, interacts with GyrB. Zn(2+) is required as a cofactor.

In terms of biological role, inhibits all the catalytic activities of DNA gyrase by preventing its interaction with DNA. Acts by binding directly to the C-terminal domain of GyrB, which probably disrupts DNA binding by the gyrase. This chain is DNA gyrase inhibitor YacG, found in Azorhizobium caulinodans (strain ATCC 43989 / DSM 5975 / JCM 20966 / LMG 6465 / NBRC 14845 / NCIMB 13405 / ORS 571).